A 195-amino-acid polypeptide reads, in one-letter code: Imidazoleglycerol-phosphate dehydratase (195 aa).

Belongs to the imidazoleglycerol-phosphate dehydratase family.

Its subcellular location is the cytoplasm. It carries out the reaction D-erythro-1-(imidazol-4-yl)glycerol 3-phosphate = 3-(imidazol-4-yl)-2-oxopropyl phosphate + H2O. The protein operates within amino-acid biosynthesis; L-histidine biosynthesis; L-histidine from 5-phospho-alpha-D-ribose 1-diphosphate: step 6/9. The sequence is that of Imidazoleglycerol-phosphate dehydratase from Geobacillus sp. (strain WCH70).